Consider the following 113-residue polypeptide: Large ribosomal subunit protein bL19 (113 aa).

The protein belongs to the bacterial ribosomal protein bL19 family.

Functionally, this protein is located at the 30S-50S ribosomal subunit interface and may play a role in the structure and function of the aminoacyl-tRNA binding site. This is Large ribosomal subunit protein bL19 from Carboxydothermus hydrogenoformans (strain ATCC BAA-161 / DSM 6008 / Z-2901).